A 430-amino-acid chain; its full sequence is Gamma-glutamyl phosphate reductase (430 aa).

It belongs to the gamma-glutamyl phosphate reductase family.

It localises to the cytoplasm. The enzyme catalyses L-glutamate 5-semialdehyde + phosphate + NADP(+) = L-glutamyl 5-phosphate + NADPH + H(+). Its pathway is amino-acid biosynthesis; L-proline biosynthesis; L-glutamate 5-semialdehyde from L-glutamate: step 2/2. Its function is as follows. Catalyzes the NADPH-dependent reduction of L-glutamate 5-phosphate into L-glutamate 5-semialdehyde and phosphate. The product spontaneously undergoes cyclization to form 1-pyrroline-5-carboxylate. This Rhodopseudomonas palustris (strain HaA2) protein is Gamma-glutamyl phosphate reductase.